The following is a 295-amino-acid chain: UDP-N-acetylenolpyruvoylglucosamine reductase (295 aa).

The region spanning 26–189 (VGGRADVLFK…VEAEFKGVNS (164 aa)) is the FAD-binding PCMH-type domain. Arg169 is a catalytic residue. Cys218 functions as the Proton donor in the catalytic mechanism. Residue Glu288 is part of the active site.

The protein belongs to the MurB family. Requires FAD as cofactor.

It is found in the cytoplasm. The catalysed reaction is UDP-N-acetyl-alpha-D-muramate + NADP(+) = UDP-N-acetyl-3-O-(1-carboxyvinyl)-alpha-D-glucosamine + NADPH + H(+). Its pathway is cell wall biogenesis; peptidoglycan biosynthesis. Functionally, cell wall formation. The polypeptide is UDP-N-acetylenolpyruvoylglucosamine reductase (Wolbachia pipientis wMel).